A 57-amino-acid polypeptide reads, in one-letter code: Large ribosomal subunit protein bL33 (57 aa).

This sequence belongs to the bacterial ribosomal protein bL33 family.

This is Large ribosomal subunit protein bL33 from Shewanella denitrificans (strain OS217 / ATCC BAA-1090 / DSM 15013).